The primary structure comprises 154 residues: Myoglobin (154 aa).

The Globin domain maps to 2–148 (GLSDGEWQQV…FRNDIAAKYK (147 aa)). The residue at position 4 (S4) is a Phosphoserine. H65 provides a ligand contact to nitrite. H65 contacts O2. H94 contacts heme b.

Belongs to the globin family. Monomeric.

It is found in the cytoplasm. The protein localises to the sarcoplasm. The catalysed reaction is Fe(III)-heme b-[protein] + nitric oxide + H2O = Fe(II)-heme b-[protein] + nitrite + 2 H(+). It carries out the reaction H2O2 + AH2 = A + 2 H2O. Its function is as follows. Monomeric heme protein which primary function is to store oxygen and facilitate its diffusion within muscle tissues. Reversibly binds oxygen through a pentacoordinated heme iron and enables its timely and efficient release as needed during periods of heightened demand. Depending on the oxidative conditions of tissues and cells, and in addition to its ability to bind oxygen, it also has a nitrite reductase activity whereby it regulates the production of bioactive nitric oxide. Under stress conditions, like hypoxia and anoxia, it also protects cells against reactive oxygen species thanks to its pseudoperoxidase activity. This is Myoglobin (MB) from Equus quagga burchellii (Burchell's zebra).